The chain runs to 168 residues: Replicase polyprotein 1ab (168 aa).

In terms of domain architecture, Nidovirus-type SAM-dependent 2'-O-MTase spans 1–165 (PNTKSIDGEN…KLLNFGNHLV (165 aa)).

Functionally, the replicase polyprotein of coronaviruses is a multifunctional protein: it contains the activities necessary for the transcription of negative stranded RNA, leader RNA, subgenomic mRNAs and progeny virion RNA as well as proteinases responsible for the cleavage of the polyprotein into functional products. The polypeptide is Replicase polyprotein 1ab (rep) (Canine coronavirus (strain Insavc-1) (CCoV)).